Consider the following 239-residue polypeptide: LexA repressor (239 aa).

The segment at residues 26–46 (FDEMKDALDLASKSGIHRLIT) is a DNA-binding region (H-T-H motif). Residues 84–107 (SPSVIEGSLGKPQPVATPAPAKSV) are disordered. Residues serine 159 and lysine 197 each act as for autocatalytic cleavage activity in the active site.

Belongs to the peptidase S24 family. As to quaternary structure, homodimer.

It catalyses the reaction Hydrolysis of Ala-|-Gly bond in repressor LexA.. Functionally, represses a number of genes involved in the response to DNA damage (SOS response), including recA and lexA. In the presence of single-stranded DNA, RecA interacts with LexA causing an autocatalytic cleavage which disrupts the DNA-binding part of LexA, leading to derepression of the SOS regulon and eventually DNA repair. The protein is LexA repressor of Rhizobium johnstonii (strain DSM 114642 / LMG 32736 / 3841) (Rhizobium leguminosarum bv. viciae).